The sequence spans 336 residues: Ketol-acid reductoisomerase (NADP(+)) 1 (336 aa).

Positions 2–181 (AKVYYEKDVT…GATRAGVLET (180 aa)) constitute a KARI N-terminal Rossmann domain. NADP(+) contacts are provided by residues 25 to 28 (YGSQ), Arg-48, Ser-52, and 82 to 85 (DELQ). Residue His-107 is part of the active site. Gly-133 lines the NADP(+) pocket. The KARI C-terminal knotted domain maps to 182–327 (TFKEETETDL…RKLREMMPFV (146 aa)). Positions 190, 194, 226, and 230 each coordinate Mg(2+). Residue Ser-251 coordinates substrate.

It belongs to the ketol-acid reductoisomerase family. The cofactor is Mg(2+).

It catalyses the reaction (2R)-2,3-dihydroxy-3-methylbutanoate + NADP(+) = (2S)-2-acetolactate + NADPH + H(+). The catalysed reaction is (2R,3R)-2,3-dihydroxy-3-methylpentanoate + NADP(+) = (S)-2-ethyl-2-hydroxy-3-oxobutanoate + NADPH + H(+). Its pathway is amino-acid biosynthesis; L-isoleucine biosynthesis; L-isoleucine from 2-oxobutanoate: step 2/4. It functions in the pathway amino-acid biosynthesis; L-valine biosynthesis; L-valine from pyruvate: step 2/4. Its function is as follows. Involved in the biosynthesis of branched-chain amino acids (BCAA). Catalyzes an alkyl-migration followed by a ketol-acid reduction of (S)-2-acetolactate (S2AL) to yield (R)-2,3-dihydroxy-isovalerate. In the isomerase reaction, S2AL is rearranged via a Mg-dependent methyl migration to produce 3-hydroxy-3-methyl-2-ketobutyrate (HMKB). In the reductase reaction, this 2-ketoacid undergoes a metal-dependent reduction by NADPH to yield (R)-2,3-dihydroxy-isovalerate. This is Ketol-acid reductoisomerase (NADP(+)) 1 from Bacillus cereus (strain ATCC 10987 / NRS 248).